The chain runs to 288 residues: Scolexin B (288 aa).

Residues 1–20 (MFASKLAVCSALALLAVAHA) form the signal peptide. In terms of domain architecture, Peptidase S1 spans 21 to 287 (APGGNDIQKI…VRDWIKKVTN (267 aa)). The interval 27-56 (IQKITKAPNVPTKAEGDAASKASAPAIPPK) is disordered. Cysteines 72 and 88 form a disulfide. Residues His-87 and Asp-145 each act as charge relay system in the active site. Disulfide bonds link Cys-210–Cys-223 and Cys-235–Cys-264. The Charge relay system role is filled by Ser-239.

Belongs to the peptidase S1 family.

This Heliothis virescens (Tobacco budworm moth) protein is Scolexin B.